A 202-amino-acid polypeptide reads, in one-letter code: Josephin-1 (202 aa).

Positions 1 to 22 (MSCVPWKGDKAKAESSDLPQAA) are disordered. S15 is modified (phosphoserine). The Josephin domain maps to 23-202 (PPQIYHEKQR…EAHQSWRADV (180 aa)). C36 functions as the Nucleophile in the catalytic mechanism. H139 serves as the catalytic Proton acceptor.

Interacts with beta-actin/ACTB. Monoubiquitinated. Ubiquitination activates deubiquitination activity in vitro. Widely expressed (at protein level).

Its subcellular location is the cell membrane. It localises to the cytoplasm. The catalysed reaction is Thiol-dependent hydrolysis of ester, thioester, amide, peptide and isopeptide bonds formed by the C-terminal Gly of ubiquitin (a 76-residue protein attached to proteins as an intracellular targeting signal).. In terms of biological role, deubiquitinates monoubiquitinated probes (in vitro). When ubiquitinated, cleaves 'Lys-63'-linked and 'Lys-48'-linked poly-ubiquitin chains (in vitro), hence may act as a deubiquitinating enzyme. May increase macropinocytosis and suppress clathrin- and caveolae-mediated endocytosis. May enhance membrane dynamics and cell motility independently of its catalytic activity. This chain is Josephin-1 (Josd1), found in Mus musculus (Mouse).